A 32-amino-acid polypeptide reads, in one-letter code: Photosystem II reaction center protein T (32 aa).

The helical transmembrane segment at 3–23 (AFAYVLILTLAVVTLFFAVAF) threads the bilayer.

The protein belongs to the PsbT family. In terms of assembly, PSII is composed of 1 copy each of membrane proteins PsbA, PsbB, PsbC, PsbD, PsbE, PsbF, PsbH, PsbI, PsbJ, PsbK, PsbL, PsbM, PsbT, PsbX, PsbY, Psb30/Ycf12, peripheral proteins PsbO, CyanoQ (PsbQ), PsbU, PsbV and a large number of cofactors. It forms dimeric complexes.

It localises to the cellular thylakoid membrane. Found at the monomer-monomer interface of the photosystem II (PS II) dimer, plays a role in assembly and dimerization of PSII. PSII is a light-driven water plastoquinone oxidoreductase, using light energy to abstract electrons from H(2)O, generating a proton gradient subsequently used for ATP formation. In Prochlorococcus marinus (strain MIT 9301), this protein is Photosystem II reaction center protein T.